Here is a 390-residue protein sequence, read N- to C-terminus: LL-diaminopimelate aminotransferase (390 aa).

Residues tyrosine 13, glycine 38, lysine 102, tyrosine 126, and asparagine 176 each coordinate substrate. Pyridoxal 5'-phosphate contacts are provided by residues 101-102 (SK), tyrosine 126, asparagine 176, tyrosine 207, and 235-237 (SVS). At lysine 238 the chain carries N6-(pyridoxal phosphate)lysine. Residue arginine 246 coordinates pyridoxal 5'-phosphate. A substrate-binding site is contributed by arginine 364.

The protein belongs to the class-I pyridoxal-phosphate-dependent aminotransferase family. LL-diaminopimelate aminotransferase subfamily. In terms of assembly, homodimer. Pyridoxal 5'-phosphate is required as a cofactor.

It catalyses the reaction (2S,6S)-2,6-diaminopimelate + 2-oxoglutarate = (S)-2,3,4,5-tetrahydrodipicolinate + L-glutamate + H2O + H(+). It participates in amino-acid biosynthesis; L-lysine biosynthesis via DAP pathway; LL-2,6-diaminopimelate from (S)-tetrahydrodipicolinate (aminotransferase route): step 1/1. Involved in the synthesis of meso-diaminopimelate (m-DAP or DL-DAP), required for both lysine and peptidoglycan biosynthesis. Catalyzes the direct conversion of tetrahydrodipicolinate to LL-diaminopimelate. Is also able to catalyze the reverse reaction in vitro, i.e. the transamination of LL-diaminopimelate with 2-oxoglutarate to produce tetrahydrodipicolinate and glutamate. Can also use m-DAP instead of LL-DAP as the amino-group donor, and oxaloacetate instead of 2-oxoglutarate as the amino-group acceptor. This is LL-diaminopimelate aminotransferase from Moorella thermoacetica (strain ATCC 39073 / JCM 9320).